The sequence spans 1192 residues: Methionine synthase (1192 aa).

Positions 1 to 312 (MTAADKHLYD…AHIREVAAAV (312 aa)) constitute a Hcy-binding domain. Zn(2+) contacts are provided by cysteine 231, cysteine 297, and cysteine 298. Residues 343-601 (VLVIGERTNA…RIPEEQRNVA (259 aa)) enclose the Pterin-binding domain. In terms of domain architecture, B12-binding N-terminal spans 635–728 (RLAELAGLPL…HMERSDDDSG (94 aa)). The B12-binding domain occupies 729–866 (KGRIVLATVK…SAKRGEAPDE (138 aa)). Methylcob(III)alamin is bound by residues 739 to 743 (GDVHD), histidine 742, serine 787, and alanine 845. The tract at residues 860–904 (RGEAPDENSPEAIKAREKEAERKARHQRSKRIAAQRKAAEEPVEV) is disordered. The span at 872–881 (IKAREKEAER) shows a compositional bias: basic and acidic residues. Over residues 882-893 (KARHQRSKRIAA) the composition is skewed to basic residues. Residues 893 to 1192 (AQRKAAEEPV…HHPEAKYFNV (300 aa)) enclose the AdoMet activation domain. S-adenosyl-L-methionine is bound by residues aspartate 940, arginine 1135, and 1189 to 1190 (YF).

This sequence belongs to the vitamin-B12 dependent methionine synthase family. The cofactor is methylcob(III)alamin. Requires Zn(2+) as cofactor.

It carries out the reaction (6S)-5-methyl-5,6,7,8-tetrahydrofolate + L-homocysteine = (6S)-5,6,7,8-tetrahydrofolate + L-methionine. It participates in amino-acid biosynthesis; L-methionine biosynthesis via de novo pathway; L-methionine from L-homocysteine (MetH route): step 1/1. Catalyzes the transfer of a methyl group from methyl-cobalamin to homocysteine, yielding enzyme-bound cob(I)alamin and methionine. Subsequently, remethylates the cofactor using methyltetrahydrofolate. The sequence is that of Methionine synthase (metH) from Mycobacterium tuberculosis (strain ATCC 25618 / H37Rv).